Consider the following 478-residue polypeptide: 3-isopropylmalate dehydratase large subunit (478 aa).

Positions 355, 415, and 418 each coordinate [4Fe-4S] cluster.

The protein belongs to the aconitase/IPM isomerase family. LeuC type 1 subfamily. In terms of assembly, heterodimer of LeuC and LeuD. Requires [4Fe-4S] cluster as cofactor.

It catalyses the reaction (2R,3S)-3-isopropylmalate = (2S)-2-isopropylmalate. It functions in the pathway amino-acid biosynthesis; L-leucine biosynthesis; L-leucine from 3-methyl-2-oxobutanoate: step 2/4. Catalyzes the isomerization between 2-isopropylmalate and 3-isopropylmalate, via the formation of 2-isopropylmaleate. This is 3-isopropylmalate dehydratase large subunit from Paracoccus denitrificans (strain Pd 1222).